Reading from the N-terminus, the 485-residue chain is Adenosylhomocysteinase (485 aa).

Substrate is bound by residues Thr-64, Asp-139, and Glu-205. 206 to 208 (TTT) serves as a coordination point for NAD(+). Substrate-binding residues include Lys-235 and Asp-239. Residues Asn-240, 269–274 (GYGDVG), Glu-292, Asn-327, 348–350 (IGH), and Asn-397 each bind NAD(+).

It belongs to the adenosylhomocysteinase family. Homotetramer. NAD(+) serves as cofactor.

The enzyme catalyses S-adenosyl-L-homocysteine + H2O = L-homocysteine + adenosine. It functions in the pathway amino-acid biosynthesis; L-homocysteine biosynthesis; L-homocysteine from S-adenosyl-L-homocysteine: step 1/1. Its function is as follows. Adenosylhomocysteine is a competitive inhibitor of S-adenosyl-L-methionine-dependent methyl transferase reactions; therefore adenosylhomocysteinase may play a key role in the control of methylations via regulation of the intracellular concentration of adenosylhomocysteine. The sequence is that of Adenosylhomocysteinase (SAHH) from Catharanthus roseus (Madagascar periwinkle).